Reading from the N-terminus, the 195-residue chain is dCTP deaminase, dUMP-forming (195 aa).

DCTP is bound by residues 105–110 (RSSLGR), aspartate 123, 131–133 (TLE), glutamine 152, tyrosine 166, lysine 173, and glutamine 177. The active-site Proton donor/acceptor is the glutamate 133. A disordered region spans residues 161 to 195 (PADRPYGDERGSKYQDQDGPQASRIRGDREFGGTQ). Basic and acidic residues predominate over residues 165–176 (PYGDERGSKYQD). The segment covering 185 to 195 (IRGDREFGGTQ) has biased composition (basic and acidic residues).

It belongs to the dCTP deaminase family. As to quaternary structure, homotrimer.

It catalyses the reaction dCTP + 2 H2O = dUMP + NH4(+) + diphosphate. The protein operates within pyrimidine metabolism; dUMP biosynthesis; dUMP from dCTP: step 1/1. Bifunctional enzyme that catalyzes both the deamination of dCTP to dUTP and the hydrolysis of dUTP to dUMP without releasing the toxic dUTP intermediate. The chain is dCTP deaminase, dUMP-forming from Halobacterium salinarum (strain ATCC 700922 / JCM 11081 / NRC-1) (Halobacterium halobium).